The following is a 75-amino-acid chain: Conotoxin ar11a (75 aa).

Residues 1 to 19 (MKLCATFLLVLVTLPLVTG) form the signal peptide. A propeptide spanning residues 20–36 (EKSSERSLSGAILRGVR) is cleaved from the precursor. 4 cysteine pairs are disulfide-bonded: C39-C53, C46-C58, C52-C63, and C57-C70.

In terms of tissue distribution, expressed by the venom duct.

It is found in the secreted. In terms of biological role, both natural (L-Leu form) and synthetic (D-Leu from) peptides equally cause sensitivity to touch and body tremor. Neither L-Leu form nor D-Leu form is active on nerve-muscle preparation. In Conus arenatus (Sand-dusted cone), this protein is Conotoxin ar11a.